Here is a 126-residue protein sequence, read N- to C-terminus: Large ribosomal subunit protein bL17 (126 aa).

It belongs to the bacterial ribosomal protein bL17 family. As to quaternary structure, part of the 50S ribosomal subunit. Contacts protein L32.

This is Large ribosomal subunit protein bL17 from Aliivibrio salmonicida (strain LFI1238) (Vibrio salmonicida (strain LFI1238)).